A 264-amino-acid polypeptide reads, in one-letter code: uncharacterized protein (264 aa).

The helical transmembrane segment at 7-27 (LTLGICLVLLIILIVGYVIMT) threads the bilayer.

The protein belongs to the staphylococcal tandem lipoprotein family.

It is found in the cell membrane. This is an uncharacterized protein from Staphylococcus aureus (strain N315).